We begin with the raw amino-acid sequence, 228 residues long: Cytidylate kinase (228 aa).

An ATP-binding site is contributed by 17–25 (GPTASGKGT).

It belongs to the cytidylate kinase family. Type 1 subfamily.

Its subcellular location is the cytoplasm. The enzyme catalyses CMP + ATP = CDP + ADP. The catalysed reaction is dCMP + ATP = dCDP + ADP. This chain is Cytidylate kinase, found in Burkholderia multivorans (strain ATCC 17616 / 249).